A 403-amino-acid polypeptide reads, in one-letter code: Casein kinase I isoform delta-A (403 aa).

One can recognise a Protein kinase domain in the interval 9–277; that stretch reads YRLGRKIGSG…YLRQLFRNLF (269 aa). ATP is bound by residues 15 to 23 and Lys38; that span reads IGSGSFGDI. The Proton acceptor role is filled by Asp128. Positions 315 to 340 are autoinhibitory; the sequence is QGRIPLPRVMLPTSSGRPRGTQEVAP. The tract at residues 322 to 403 is disordered; that stretch reads RVMLPTSSGR…PSGLQSAVPR (82 aa).

This sequence belongs to the protein kinase superfamily. As to quaternary structure, monomer. Interacts with per1 and per2. Component of the circadian core oscillator. Autophosphorylated on serine and threonine residues.

It localises to the cytoplasm. Its subcellular location is the nucleus. It carries out the reaction L-seryl-[protein] + ATP = O-phospho-L-seryl-[protein] + ADP + H(+). The enzyme catalyses L-threonyl-[protein] + ATP = O-phospho-L-threonyl-[protein] + ADP + H(+). Exhibits substrate-dependent heparin activation. In terms of biological role, casein kinases are operationally defined by their preferential utilization of acidic proteins such as caseins as substrates. Central component of the circadian clock. May act as a negative regulator of circadian rhythmicity by phosphorylating per1 and per2, which may lead to their degradation. Participates in wnt signaling. This is Casein kinase I isoform delta-A (csnk1da) from Danio rerio (Zebrafish).